Consider the following 503-residue polypeptide: Maturase K (503 aa).

It belongs to the intron maturase 2 family. MatK subfamily.

The protein localises to the plastid. The protein resides in the chloroplast. In terms of biological role, usually encoded in the trnK tRNA gene intron. Probably assists in splicing its own and other chloroplast group II introns. The sequence is that of Maturase K from Kunzea baxteri (Scarlet kunzea).